Reading from the N-terminus, the 458-residue chain is ATP synthase subunit beta (458 aa).

An ATP-binding site is contributed by 148 to 155 (GGAGVGKT).

This sequence belongs to the ATPase alpha/beta chains family. In terms of assembly, F-type ATPases have 2 components, CF(1) - the catalytic core - and CF(0) - the membrane proton channel. CF(1) has five subunits: alpha(3), beta(3), gamma(1), delta(1), epsilon(1). CF(0) has three main subunits: a(1), b(2) and c(9-12). The alpha and beta chains form an alternating ring which encloses part of the gamma chain. CF(1) is attached to CF(0) by a central stalk formed by the gamma and epsilon chains, while a peripheral stalk is formed by the delta and b chains.

The protein localises to the cell inner membrane. The catalysed reaction is ATP + H2O + 4 H(+)(in) = ADP + phosphate + 5 H(+)(out). Produces ATP from ADP in the presence of a proton gradient across the membrane. The catalytic sites are hosted primarily by the beta subunits. This is ATP synthase subunit beta from Shewanella halifaxensis (strain HAW-EB4).